The chain runs to 400 residues: Cysteine desulfurase (400 aa).

Residues 71-72 (GT), Asn-150, Gln-178, and 198-200 (SGH) contribute to the pyridoxal 5'-phosphate site. At Lys-201 the chain carries N6-(pyridoxal phosphate)lysine. Thr-236 contacts pyridoxal 5'-phosphate. Cys-324 serves as the catalytic Cysteine persulfide intermediate. Position 324 (Cys-324) interacts with [2Fe-2S] cluster.

Belongs to the class-V pyridoxal-phosphate-dependent aminotransferase family. NifS/IscS subfamily. As to quaternary structure, homodimer. Requires pyridoxal 5'-phosphate as cofactor.

The catalysed reaction is (sulfur carrier)-H + L-cysteine = (sulfur carrier)-SH + L-alanine. In terms of biological role, catalyzes the removal of elemental sulfur atoms from cysteine to produce alanine. Seems to participate in the biosynthesis of the nitrogenase metalloclusters by providing the inorganic sulfur required for the Fe-S core formation. The chain is Cysteine desulfurase from Nostoc sp. (strain PCC 7120 / SAG 25.82 / UTEX 2576).